A 156-amino-acid chain; its full sequence is ATP synthase subunit b', chloroplastic (156 aa).

Residues Asn-20–Tyr-42 traverse the membrane as a helical segment.

The protein belongs to the ATPase B chain family. In terms of assembly, F-type ATPases have 2 components, F(1) - the catalytic core - and F(0) - the membrane proton channel. F(1) has five subunits: alpha(3), beta(3), gamma(1), delta(1), epsilon(1). F(0) has four main subunits: a(1), b(1), b'(1) and c(10-14). The alpha and beta chains form an alternating ring which encloses part of the gamma chain. F(1) is attached to F(0) by a central stalk formed by the gamma and epsilon chains, while a peripheral stalk is formed by the delta, b and b' chains.

The protein localises to the plastid. It localises to the chloroplast thylakoid membrane. Its function is as follows. F(1)F(0) ATP synthase produces ATP from ADP in the presence of a proton or sodium gradient. F-type ATPases consist of two structural domains, F(1) containing the extramembraneous catalytic core and F(0) containing the membrane proton channel, linked together by a central stalk and a peripheral stalk. During catalysis, ATP synthesis in the catalytic domain of F(1) is coupled via a rotary mechanism of the central stalk subunits to proton translocation. Component of the F(0) channel, it forms part of the peripheral stalk, linking F(1) to F(0). The b'-subunit is a diverged and duplicated form of b found in plants and photosynthetic bacteria. This Pyropia yezoensis (Susabi-nori) protein is ATP synthase subunit b', chloroplastic.